The primary structure comprises 282 residues: Pantothenate synthetase (282 aa).

Position 26-33 (26-33 (MGNLHEGH)) interacts with ATP. His33 serves as the catalytic Proton donor. Gln57 lines the (R)-pantoate pocket. Gln57 serves as a coordination point for beta-alanine. Residue 144–147 (GKKD) coordinates ATP. Gln150 is a binding site for (R)-pantoate. ATP is bound by residues Ile173 and 181 to 184 (LSSR).

The protein belongs to the pantothenate synthetase family. In terms of assembly, homodimer.

It is found in the cytoplasm. The catalysed reaction is (R)-pantoate + beta-alanine + ATP = (R)-pantothenate + AMP + diphosphate + H(+). Its pathway is cofactor biosynthesis; (R)-pantothenate biosynthesis; (R)-pantothenate from (R)-pantoate and beta-alanine: step 1/1. Catalyzes the condensation of pantoate with beta-alanine in an ATP-dependent reaction via a pantoyl-adenylate intermediate. In Cupriavidus necator (strain ATCC 17699 / DSM 428 / KCTC 22496 / NCIMB 10442 / H16 / Stanier 337) (Ralstonia eutropha), this protein is Pantothenate synthetase.